We begin with the raw amino-acid sequence, 314 residues long: Cytochrome f (314 aa).

An N-terminal signal peptide occupies residues 1–30 (MATNKFFKSLLFALTIAINSFGFCIQDAVA). Residues Tyr31, Cys51, Cys54, and His55 each contribute to the heme site. A helical membrane pass occupies residues 280–300 (IYGYLAFCFSVLITQIMLVLK).

The protein belongs to the cytochrome f family. The 4 large subunits of the cytochrome b6-f complex are cytochrome b6, subunit IV (17 kDa polypeptide, petD), cytochrome f and the Rieske protein, while the 4 small subunits are PetG, PetL, PetM and PetN. The complex functions as a dimer. The cofactor is heme.

Its subcellular location is the plastid. The protein localises to the chloroplast thylakoid membrane. Its function is as follows. Component of the cytochrome b6-f complex, which mediates electron transfer between photosystem II (PSII) and photosystem I (PSI), cyclic electron flow around PSI, and state transitions. In Phaeodactylum tricornutum (strain CCAP 1055/1), this protein is Cytochrome f.